The primary structure comprises 130 residues: Guanyl-specific ribonuclease T1 (130 aa).

Positions 1–26 (MMYSKLLTLTTLLLPTALALPSLVER) are cleaved as a signal peptide. Disulfide bonds link Cys28–Cys36 and Cys32–Cys129. His66 is a catalytic residue. Glu84 serves as the catalytic Proton acceptor. His118 serves as the catalytic Proton donor.

The protein belongs to the ribonuclease N1/T1 family. In terms of assembly, monomer.

It catalyses the reaction [RNA] containing guanosine + H2O = an [RNA fragment]-3'-guanosine-3'-phosphate + a 5'-hydroxy-ribonucleotide-3'-[RNA fragment].. This is Guanyl-specific ribonuclease T1 (rntA) from Aspergillus oryzae (strain ATCC 42149 / RIB 40) (Yellow koji mold).